Consider the following 604-residue polypeptide: Numb-like protein (604 aa).

4 disordered regions span residues methionine 1–alanine 68, glycine 223–alanine 283, alanine 372–proline 457, and lysine 531–leucine 604. One can recognise a PID domain in the interval arginine 74 to phenylalanine 225. Residues serine 224 and serine 228 each carry the phosphoserine modification. Residues proline 233–glutamate 245 show a composition bias toward basic and acidic residues. Over residues alanine 246–glycine 260 the composition is skewed to low complexity. A Phosphoserine modification is found at serine 263. Phosphothreonine is present on threonine 279. The segment covering threonine 409–glutamate 418 has biased composition (basic and acidic residues). Serine 411 carries the phosphoserine modification. Composition is skewed to low complexity over residues glutamine 427–glutamine 441 and serine 542–proline 552. Over residues asparagine 553–glutamate 568 the composition is skewed to pro residues.

As to quaternary structure, interacts (via PTB domain) with MAP3K7IP2 (via C-terminal). Interacts (via C-terminal) with TRAF6 (via TRAF domains). Associates with EPS15 and NOTCH1. In terms of tissue distribution, preferentially expressed in the nervous system. In the developing neocortex, expressed in postmitotic neurons in the cortical plate but not in progenitors within the ventricular zone.

The protein resides in the cytoplasm. In terms of biological role, plays a role in the process of neurogenesis. Required throughout embryonic neurogenesis to maintain neural progenitor cells, also called radial glial cells (RGCs), by allowing their daughter cells to choose progenitor over neuronal cell fate. Not required for the proliferation of neural progenitor cells before the onset of embryonic neurogenesis. Also required postnatally in the subventricular zone (SVZ) neurogenesis by regulating SVZ neuroblasts survival and ependymal wall integrity. Negative regulator of NF-kappa-B signaling pathway. The inhibition of NF-kappa-B activation is mediated at least in part, by preventing MAP3K7IP2 to interact with polyubiquitin chains of TRAF6 and RIPK1 and by stimulating the 'Lys-48'-linked polyubiquitination and degradation of TRAF6 in cortical neurons. This chain is Numb-like protein (Numbl), found in Mus musculus (Mouse).